The primary structure comprises 468 residues: V-type proton ATPase subunit H (468 aa).

Belongs to the V-ATPase H subunit family. As to quaternary structure, V-ATPase is a heteromultimeric enzyme made up of two complexes: the ATP-hydrolytic V1 complex and the proton translocation V0 complex. The V1 complex consists of three catalytic AB heterodimers that form a heterohexamer, three peripheral stalks each consisting of EG heterodimers, one central rotor including subunits D and F, and the regulatory subunits C and H. The proton translocation complex V0 consists of the proton transport subunit a, a ring of proteolipid subunits c9c'', rotary subunit d, subunits e and f, and the accessory subunits VhaAC45 and ATP6AP2.

Its function is as follows. Subunit of the V1 complex of vacuolar(H+)-ATPase (V-ATPase), a multisubunit enzyme composed of a peripheral complex (V1) that hydrolyzes ATP and a membrane integral complex (V0) that translocates protons. V-ATPase is responsible for acidifying and maintaining the pH of intracellular compartments and in some cell types, is targeted to the plasma membrane, where it is responsible for acidifying the extracellular environment. Subunit H is essential for V-ATPase activity, but not for the assembly of the complex. The chain is V-type proton ATPase subunit H (VhaSFD) from Drosophila melanogaster (Fruit fly).